A 316-amino-acid polypeptide reads, in one-letter code: MSLGIMEEEDLAEYFRLQYGERLLQMLQKLPNVEGASESPSIWLLEKKKETEIMHQTMVQKKKMFQRRMETLNLRWEELGVKEAQLKAHIQKSEQFIQENDQKRIRAMKKANKERELKCQHMQELTKRKQEMVALRLEHQRLSAKLKDYYIFNKYLEKVVENSEFEEIHEVIARYKTLVSMRHDLMQSAQEGQEKIERAKARLARYMEEKDDEILQQNNELARLQMRFDRARSNVIFWESRWAHIQNTAAKKTLLLGTIKMATLNLFQIVSKHLKEVTEVALEDTHKQLDMIQQFIQDRSDIWAEVKKKEQQRVRI.

2 coiled-coil regions span residues 39-146 (SPSI…SAKL) and 178-232 (LVSM…DRAR).

This sequence belongs to the CFAP73 family. Interacts with ODF1 and ODF2. Interacts with CCDC38. Interacts with CCDC146. Interacts with CFAP53.

It localises to the cytoplasm. The protein resides in the perinuclear region. The protein localises to the cytoskeleton. Its subcellular location is the cell projection. It is found in the cilium. It localises to the flagellum. The protein resides in the microtubule organizing center. The protein localises to the centrosome. Its function is as follows. Essential for male fertility. Required for sperm development. This is Coiled-coil domain-containing protein 42 from Homo sapiens (Human).